The following is a 98-amino-acid chain: Large ribosomal subunit protein bL28 (98 aa).

The protein belongs to the bacterial ribosomal protein bL28 family.

The polypeptide is Large ribosomal subunit protein bL28 (Beijerinckia indica subsp. indica (strain ATCC 9039 / DSM 1715 / NCIMB 8712)).